Consider the following 659-residue polypeptide: Checkpoint protein RAD24 (659 aa).

The segment at 24-54 (TKWSSSRPTSPVRKARSTENDFLSKQDTSSI) is disordered. 109-116 (GPSGCSKS) provides a ligand contact to ATP. The segment covering 596–612 (EDEETSFNDDPIVDSDS) has biased composition (acidic residues). Residues 596 to 659 (EDEETSFNDD…SLSDSDLEIL (64 aa)) are disordered. 2 positions are modified to phosphoserine: Ser-652 and Ser-654.

The protein belongs to the rad17/RAD24 family. As to quaternary structure, component of the RAD24-RFC complex which consists of RAD14, RFC2, RFC3, RFC4 and RFC5 and associates with the checkpoint clamp DDC1:MEC3:RAD17 complex. RAD24 interacts with ECO1.

The protein resides in the nucleus. Functionally, participates in checkpoint pathways arrest of the cell cycle, a mechanism that allows the DNA repair pathways to act to restore the integrity of the DNA prior to DNA synthesis or separation of the replicated chromosomes. Regulates the DNA damage checkpoint pathway throughout the cell cycle, when associated with RCF5. Component of the RFC-like RAD24-RFC complex which loads the checkpoint clamp DDC1:MEC3:RAD17 complex and is involved in DNA repair pathways. During a clamp loading circle, the RFC:clamp complex binds to DNA and the recognition of the double-stranded/single-stranded junction stimulates ATP hydrolysis by RFC. The complex presumably provides bipartite ATP sites in which one subunit supplies a catalytic site for hydrolysis of ATP bound to the neighboring subunit. Dissociation of RFC from the clamp leaves the clamp encircling DNA. The sequence is that of Checkpoint protein RAD24 (RAD24) from Saccharomyces cerevisiae (strain ATCC 204508 / S288c) (Baker's yeast).